Here is a 64-residue protein sequence, read N- to C-terminus: Beta-defensin 5 (64 aa).

An N-terminal signal peptide occupies residues 1 to 23 (MKIHYLLFAFLLVLLSPLAGVFS). 3 disulfides stabilise this stretch: Cys-32-Cys-60, Cys-39-Cys-53, and Cys-43-Cys-61.

The protein belongs to the beta-defensin family.

It localises to the secreted. Its function is as follows. Has antibacterial activity. This Mus musculus (Mouse) protein is Beta-defensin 5 (Defb5).